The primary structure comprises 759 residues: MGSAKILSFTLLLFVGYTLVHGSTPKHYIVYMGDRSHPNSESVVRANHEILASVTGSLNDAKAAAIHHYSRSFQGFSAMITPEQAKKLADHNSVVSVFESKMNKLHTTHSWDFLGLDTVYKNNPSALDSASNVIVGVIDSGVWPESESFNDYGLGPVPEKFKGECVTGDNFTLANCNKKIIGARFYSKGLEAEIGPLENIVDSIFFRSPRDSDGHGTHTASTIAGSIVSNVSLFGMAKGTARGGAPSARLSIYKACWFGFCSDADVFAAMDDAIHDGVDILSLSLGPDPPQPLYFENAISVGAFHAFQKGILVSASAGNSVFPRTACNVAPWIFTVAASTVDREFRSDIYLGNSKVLKGLSLNPIKMEGSYGLIYGSAAAAAGDAALNASFCKEHTLDPTLIKGKIVICTVEKFTDNRREKAIIIKQGGGVGMILIDHNARDVGFQFVIPSTMIGQDAVEELQAYMKTEKNPTATIFPTLTLVGTKPAPESAAFSSVGPNIITPDIIKPDITGPGVNILAAWSPVATEATVEQKSVNYNIISGTSMSCPHISAISAIIKSHHPSWSPAAIMSAIMTSATVMDNTHSLIGRDPNGTQATPFDYGSGHVNPVASLNPGLVYDFSSQDVLNFLCSNGASPAQLKNLTGELTQCQKSPTASYNFNYPSIGVSNLNGSLSVYRTVTYYGQEPTEYFASVERPSGVIVRVTPAKLKFWKAGEKITFRIDFTPFKNSNGNFVFGALTWNNGKQRVRSPIGLNVLST.

Residues Met-1–Gly-22 form the signal peptide. The 78-residue stretch at Tyr-28–Leu-105 folds into the Inhibitor I9 domain. Residues Ser-110–Leu-613 form the Peptidase S8 domain. Asp-139 functions as the Charge relay system in the catalytic mechanism. The N-linked (GlcNAc...) asparagine glycan is linked to Asn-170. The active-site Charge relay system is the His-215. Residues Asn-230 and Asn-388 are each glycosylated (N-linked (GlcNAc...) asparagine). Residues Ser-390–Leu-462 form the PA domain. Ser-545 functions as the Charge relay system in the catalytic mechanism. N-linked (GlcNAc...) asparagine glycosylation is found at Asn-593, Asn-642, and Asn-671.

The protein belongs to the peptidase S8 family.

Its subcellular location is the secreted. It localises to the extracellular space. It is found in the apoplast. Its function is as follows. Required for arbuscular mycorrhiza (AM) development during AM symbiosis with AM fungi (e.g. Glomeromycota intraradices). The polypeptide is Subtilisin-like serine-protease S (Lotus japonicus (Lotus corniculatus var. japonicus)).